We begin with the raw amino-acid sequence, 338 residues long: Nicotinate-nucleotide--dimethylbenzimidazole phosphoribosyltransferase (338 aa).

The Proton acceptor role is filled by Glu-305.

It belongs to the CobT family. Homodimer.

The catalysed reaction is 5,6-dimethylbenzimidazole + nicotinate beta-D-ribonucleotide = alpha-ribazole 5'-phosphate + nicotinate + H(+). Its pathway is nucleoside biosynthesis; alpha-ribazole biosynthesis; alpha-ribazole from 5,6-dimethylbenzimidazole: step 1/2. Catalyzes the synthesis of alpha-ribazole-5'-phosphate from nicotinate mononucleotide (NAMN) and 5,6-dimethylbenzimidazole (DMB). This is Nicotinate-nucleotide--dimethylbenzimidazole phosphoribosyltransferase (cobU) from Sinorhizobium sp.